A 378-amino-acid chain; its full sequence is Cytochrome b (378 aa).

A run of 4 helical transmembrane segments spans residues phenylalanine 34–methionine 54, tryptophan 78–valine 99, tryptophan 114–leucine 134, and phenylalanine 179–leucine 199. Residues histidine 84 and histidine 98 each contribute to the heme b site. Heme b-binding residues include histidine 183 and histidine 197. Residue histidine 202 coordinates a ubiquinone. 4 helical membrane-spanning segments follow: residues phenylalanine 227–serine 247, leucine 289–asparagine 309, isoleucine 321–alanine 341, and tyrosine 348–leucine 368.

The protein belongs to the cytochrome b family. The main subunits of complex b-c1 are: cytochrome b, cytochrome c1 and the Rieske protein. It depends on heme b as a cofactor.

It localises to the mitochondrion inner membrane. Its function is as follows. Component of the ubiquinol-cytochrome c reductase complex (complex III or cytochrome b-c1 complex) that is part of the mitochondrial respiratory chain. The b-c1 complex mediates electron transfer from ubiquinol to cytochrome c. Contributes to the generation of a proton gradient across the mitochondrial membrane that is then used for ATP synthesis. The polypeptide is Cytochrome b (mt:Cyt-b) (Drosophila simulans (Fruit fly)).